The primary structure comprises 444 residues: Methylenetetrahydrofolate--tRNA-(uracil-5-)-methyltransferase TrmFO (444 aa).

10–15 (GAGLAG) contributes to the FAD binding site.

This sequence belongs to the MnmG family. TrmFO subfamily. FAD is required as a cofactor.

The protein localises to the cytoplasm. The enzyme catalyses uridine(54) in tRNA + (6R)-5,10-methylene-5,6,7,8-tetrahydrofolate + NADH + H(+) = 5-methyluridine(54) in tRNA + (6S)-5,6,7,8-tetrahydrofolate + NAD(+). The catalysed reaction is uridine(54) in tRNA + (6R)-5,10-methylene-5,6,7,8-tetrahydrofolate + NADPH + H(+) = 5-methyluridine(54) in tRNA + (6S)-5,6,7,8-tetrahydrofolate + NADP(+). Functionally, catalyzes the folate-dependent formation of 5-methyl-uridine at position 54 (M-5-U54) in all tRNAs. In Streptococcus pneumoniae (strain ATCC 700669 / Spain 23F-1), this protein is Methylenetetrahydrofolate--tRNA-(uracil-5-)-methyltransferase TrmFO.